The primary structure comprises 739 residues: Homeobox protein SIX5 (739 aa).

Composition is skewed to low complexity over residues 1–24 (MATL…AAAA), 34–61 (QLLQ…AAGA), and 74–83 (PEAASEPPTG). Disordered stretches follow at residues 1–84 (MATL…PTGL), 251–294 (NRRQ…AAPV), 361–381 (LTGG…SETK), and 617–650 (LSAQ…FPAP). The homeobox DNA-binding region spans 201-260 (GEETVYCFKERSRAALKACYRGNRYPTPDEKRRLATLTGLSLTQVSNWFKNRRQRDRTGA). Residues 279 to 289 (ESSRSPEDLER) are compositionally biased toward basic and acidic residues. Low complexity predominate over residues 617 to 646 (LSAQQPPPAAATTSSTSLPFSPDSPGLLPN).

This sequence belongs to the SIX/Sine oculis homeobox family. As to quaternary structure, probably binds DNA dimer. Interacts with EYA3, and probably EYA1 and EYA2. Expressed in adult but not in fetal eyes. Found in corneal epithelium and endothelium, lens epithelium, ciliary body epithelia, cellular layers of the retina and the sclera.

The protein resides in the cytoplasm. The protein localises to the nucleus. In terms of biological role, transcription factor that is thought to be involved in regulation of organogenesis. May be involved in determination and maintenance of retina formation. Binds a 5'-GGTGTCAG-3' motif present in the ARE regulatory element of ATP1A1. Binds a 5'-TCA[AG][AG]TTNC-3' motif present in the MEF3 element in the myogenin promoter, and in the IGFBP5 promoter. Thought to be regulated by association with Dach and Eya proteins, and seems to be coactivated by EYA1, EYA2 and EYA3. This chain is Homeobox protein SIX5 (SIX5), found in Homo sapiens (Human).